A 73-amino-acid chain; its full sequence is Large ribosomal subunit protein uL30 (73 aa).

This sequence belongs to the universal ribosomal protein uL30 family. In terms of assembly, part of the 50S ribosomal subunit.

The protein is Large ribosomal subunit protein uL30 of Borreliella afzelii (strain PKo) (Borrelia afzelii).